The primary structure comprises 417 residues: GTP-binding protein YPT11 (417 aa).

The tract at residues 1–34 (MSQRKRYSLNVVTSPSIPSPTPSAPIRTNESNWE) is disordered. GTP contacts are provided by residues 97-104 (GDANVGKT), 228-232 (DTAGQ), and 292-295 (NKID). S-geranylgeranyl cysteine attachment occurs at residues cysteine 415 and cysteine 416.

Belongs to the small GTPase superfamily. Rab family. Interacts with MYO2 (via C-terminal tail domain). Interacts with YIF1, YIP3, YIP4 and YIP5.

The protein localises to the endoplasmic reticulum membrane. Its subcellular location is the bud tip. It is found in the bud neck. Its function is as follows. Involved in the positive control of both endoplasmic reticulum (ER) and mitochondrion inheritance during cell divison. Required for the MYO2-dependent retention of newly inherited mitochondria at the bud tip in developing daughter cells. The protein is GTP-binding protein YPT11 (YPT11) of Saccharomyces cerevisiae (strain YJM789) (Baker's yeast).